The sequence spans 105 residues: Dynein axonemal light chain 4 (105 aa).

The protein belongs to the dynein light chain family. In terms of assembly, consists of at least two heavy chains and a number of intermediate and light chains.

Its subcellular location is the cytoplasm. It localises to the cytoskeleton. The protein resides in the cilium axoneme. Force generating protein of respiratory cilia. Produces force towards the minus ends of microtubules. Dynein has ATPase activity. The polypeptide is Dynein axonemal light chain 4 (DNAL4) (Bos taurus (Bovine)).